The following is a 493-amino-acid chain: Monodehydroascorbate reductase, chloroplastic/mitochondrial (493 aa).

A chloroplast and mitochondrion-targeting transit peptide spans 1–51 (MSAVRRVMALASTTLPTKSGLSLWCPSSPSLARRFPARFSPIGSRIASRSL). FAD contacts are provided by residues 68–71 (GGNA), glutamate 95, arginine 102, lysine 107, and 201–202 (RE). Residues 224-230 (GGYIGME), glutamate 248, arginine 254, and glycine 313 each bind NAD(+). 226 to 230 (YIGME) contributes to the NADP(+) binding site. NADP(+) contacts are provided by arginine 254 and glycine 313. Aspartate 351 is a binding site for FAD. 367–368 (EH) contacts NAD(+). 367 to 368 (EH) provides a ligand contact to NADP(+). Residue valine 369 coordinates FAD. Arginine 373 is an L-ascorbate binding site. Tyrosine 398 lines the FAD pocket. Tyrosine 398 is a binding site for NAD(+). Position 398 (tyrosine 398) interacts with NADP(+). L-ascorbate is bound at residue arginine 400.

This sequence belongs to the FAD-dependent oxidoreductase family. Interacts in vitro with TRXy. FAD serves as cofactor.

Its subcellular location is the plastid. The protein resides in the chloroplast. It localises to the mitochondrion. The enzyme catalyses 2 monodehydro-L-ascorbate radical + NADH + H(+) = 2 L-ascorbate + NAD(+). It carries out the reaction 2,4,6-trinitrotoluene + NADH = 2,4,6-trinitrotoluene radical + e(-) + NAD(+). Redox regulation of the activity by thioredoxin TRXy1. Functionally, catalyzes the conversion of monodehydroascorbate (MDA) to ascorbate, oxidizing NADH in the process. Mediates phytotoxicity of 2,4,6-trinitrotoluene (TNT), an explosive and environmental pollutant, by reducing TNT and forming a nitro radical that spontaneously reacts with atmospheric oxygen, generating reactive superoxide. Can also use 1-chloro-2,4-dinitrobenzene (CDNB) as substrate, but not 1-chloro-4-nitrobenzene (CNB). The chain is Monodehydroascorbate reductase, chloroplastic/mitochondrial from Arabidopsis thaliana (Mouse-ear cress).